A 506-amino-acid chain; its full sequence is EPTC-inducible aldehyde dehydrogenase (506 aa).

NAD(+) is bound at residue 219 to 225; the sequence is GFGVEAG. Residues Glu-263 and Cys-302 contribute to the active site.

It belongs to the aldehyde dehydrogenase family.

The enzyme catalyses an aldehyde + NAD(+) + H2O = a carboxylate + NADH + 2 H(+). Functionally, degrades all aldehydes potentially generated by N dealkylation of thiocarbamates and may also participate in ethanolamine metabolism and further assimilation of degradation products by thiocarbamate-induced cytochrome P-450. In Rhodococcus erythropolis (Arthrobacter picolinophilus), this protein is EPTC-inducible aldehyde dehydrogenase (thcA).